An 85-amino-acid polypeptide reads, in one-letter code: Delta/kappa-theraphotoxin-Pm1a (85 aa).

The first 19 residues, 1-19, serve as a signal peptide directing secretion; that stretch reads MKTFVFIVLVALAFVLTAA. Positions 20-43 are excised as a propeptide; sequence KEERANPSELVSALAELVMLDAER. Cystine bridges form between Cys-50–Cys-64, Cys-57–Cys-69, and Cys-63–Cys-77.

This sequence belongs to the neurotoxin 10 (Hwtx-1) family. Expressed by the venom gland.

Its subcellular location is the secreted. In terms of biological role, multimodal toxin that enhances nociceptor excitability mainly by the simultaneous stimulation of repetitive firing (through Nav1.8/SCN10A channel current enhancement) and impairment of repolarization (by inhibiting delayed rectifier current of Kv2.1/KCNB1), with a potential contribution from tetrodotoxin-sensitive voltage-gated sodium channels (Nav) modified excitability. Enhances Nav1.8/SCN10A currents (EC(50)=1.1 uM), modifies the channel gating by a right-shift in steady-state inactivation and delays open-state inactivation. Also decreases Kv2.1/KCNB1 currents (IC(50)=0.43 uM) and causes a depolarizing shift in the voltage dependence of activation without change in steady-state inactivation. In addition, inhibits peak currents of human sodium channels (Nav1.1 to Nav1.7, IC(50)=0.38-2.3 uM) and delays fast inactivation of Nav1.1/SCN1A, Nav1.3/SCN3A, Nav1.6/SCN8A, and Nav1.7/SCN9A. In small dorsal root ganglion neurons, induces hyperexcitability by enhancing tetrodotoxin-resistant sodium currents, impairing repolarization and lowering the threshold of action potential firing, consistent with the severe pain associated with envenomation. In vivo, elicits nocifensive behavior in mice after intraplantar injection. This is Delta/kappa-theraphotoxin-Pm1a from Pelinobius muticus (King baboon spider).